The primary structure comprises 361 residues: 5-formaminoimidazole-4-carboxamide-1-(beta)-D-ribofuranosyl 5'-monophosphate synthetase (361 aa).

5-amino-1-(5-phospho-beta-D-ribosyl)imidazole-4-carboxamide contacts are provided by histidine 27 and serine 94. Residues 116–348 form the ATP-grasp domain; it reads RAILRWEAER…MGQRIAKEIK (233 aa). Residues 146–208 and glutamate 230 contribute to the ATP site; that span reads PDEI…ANYC. 5-amino-1-(5-phospho-beta-D-ribosyl)imidazole-4-carboxamide is bound at residue asparagine 258. Residues glutamine 297 and glutamate 310 each coordinate Mg(2+).

It belongs to the phosphohexose mutase family. It depends on Mg(2+) as a cofactor. Mn(2+) serves as cofactor.

The enzyme catalyses 5-amino-1-(5-phospho-beta-D-ribosyl)imidazole-4-carboxamide + formate + ATP = 5-formamido-1-(5-phospho-D-ribosyl)imidazole-4-carboxamide + ADP + phosphate. Its pathway is purine metabolism; IMP biosynthesis via de novo pathway; 5-formamido-1-(5-phospho-D-ribosyl)imidazole-4-carboxamide from 5-amino-1-(5-phospho-D-ribosyl)imidazole-4-carboxamide (formate route): step 1/1. Catalyzes the ATP- and formate-dependent formylation of 5-aminoimidazole-4-carboxamide-1-beta-d-ribofuranosyl 5'-monophosphate (AICAR) to 5-formaminoimidazole-4-carboxamide-1-beta-d-ribofuranosyl 5'-monophosphate (FAICAR) in the absence of folates. The chain is 5-formaminoimidazole-4-carboxamide-1-(beta)-D-ribofuranosyl 5'-monophosphate synthetase from Methanococcus vannielii (strain ATCC 35089 / DSM 1224 / JCM 13029 / OCM 148 / SB).